The chain runs to 645 residues: UvrABC system protein C (645 aa).

Positions Met-1–Val-20 are disordered. In terms of domain architecture, GIY-YIG spans Tyr-40 to Ile-118. One can recognise a UVR domain in the interval Thr-228 to Ile-263.

Belongs to the UvrC family. In terms of assembly, interacts with UvrB in an incision complex.

Its subcellular location is the cytoplasm. The UvrABC repair system catalyzes the recognition and processing of DNA lesions. UvrC both incises the 5' and 3' sides of the lesion. The N-terminal half is responsible for the 3' incision and the C-terminal half is responsible for the 5' incision. The sequence is that of UvrABC system protein C from Gluconobacter oxydans (strain 621H) (Gluconobacter suboxydans).